Reading from the N-terminus, the 397-residue chain is Flavohemoprotein (397 aa).

In terms of domain architecture, Globin spans 4-140 (SFSPHTITLI…IANLLKDREA (137 aa)). His87 is a heme b binding site. Residues Tyr97 and Glu139 each act as charge relay system in the active site. Positions 151–397 (GGWIHWRRFV…FGPMDEEMAA (247 aa)) are reductase. The FAD-binding FR-type domain maps to 154–258 (IHWRRFVISK…TPPVGDFFLP (105 aa)). FAD contacts are provided by residues Tyr192 and 207–210 (RNYS). An NADP(+)-binding site is contributed by 271–276 (GVGLTP). 387 to 390 (FFGP) contributes to the FAD binding site.

It belongs to the globin family. Two-domain flavohemoproteins subfamily. This sequence in the C-terminal section; belongs to the flavoprotein pyridine nucleotide cytochrome reductase family. It depends on heme b as a cofactor. Requires FAD as cofactor.

It catalyses the reaction 2 nitric oxide + NADPH + 2 O2 = 2 nitrate + NADP(+) + H(+). It carries out the reaction 2 nitric oxide + NADH + 2 O2 = 2 nitrate + NAD(+) + H(+). Is involved in NO detoxification in an aerobic process, termed nitric oxide dioxygenase (NOD) reaction that utilizes O(2) and NAD(P)H to convert NO to nitrate, which protects the bacterium from various noxious nitrogen compounds. Therefore, plays a central role in the inducible response to nitrosative stress. The polypeptide is Flavohemoprotein (Xylella fastidiosa (strain 9a5c)).